The primary structure comprises 273 residues: Dermonecrotic toxin LhSicTox-alphaIA2bi (273 aa).

Mg(2+) is bound by residues E25 and D27. Catalysis depends on H41, which acts as the Nucleophile. Intrachain disulfides connect C45–C51 and C47–C190. Position 85 (D85) interacts with Mg(2+).

The protein belongs to the arthropod phospholipase D family. Class II subfamily. It depends on Mg(2+) as a cofactor. In terms of tissue distribution, expressed by the venom gland.

The protein localises to the secreted. It catalyses the reaction an N-(acyl)-sphingosylphosphocholine = an N-(acyl)-sphingosyl-1,3-cyclic phosphate + choline. The catalysed reaction is an N-(acyl)-sphingosylphosphoethanolamine = an N-(acyl)-sphingosyl-1,3-cyclic phosphate + ethanolamine. The enzyme catalyses a 1-acyl-sn-glycero-3-phosphocholine = a 1-acyl-sn-glycero-2,3-cyclic phosphate + choline. It carries out the reaction a 1-acyl-sn-glycero-3-phosphoethanolamine = a 1-acyl-sn-glycero-2,3-cyclic phosphate + ethanolamine. Functionally, dermonecrotic toxins cleave the phosphodiester linkage between the phosphate and headgroup of certain phospholipids (sphingolipid and lysolipid substrates), forming an alcohol (often choline) and a cyclic phosphate. This toxin acts on sphingomyelin (SM). It may also act on ceramide phosphoethanolamine (CPE), lysophosphatidylcholine (LPC) and lysophosphatidylethanolamine (LPE), but not on lysophosphatidylserine (LPS), and lysophosphatidylglycerol (LPG). It acts by transphosphatidylation, releasing exclusively cyclic phosphate products as second products. Induces dermonecrosis, hemolysis, increased vascular permeability, edema, inflammatory response, and platelet aggregation. This Loxosceles hirsuta (Recluse spider) protein is Dermonecrotic toxin LhSicTox-alphaIA2bi.